We begin with the raw amino-acid sequence, 160 residues long: Zinc finger A20 and AN1 domain-containing stress-associated protein 5 (160 aa).

The A20-type zinc finger occupies threonine 20 to alanine 54. Positions 26, 30, 42, 45, 101, 104, 115, 117, 122, 125, 131, and 133 each coordinate Zn(2+). The segment at glutamine 95 to glycine 141 adopts an AN1-type zinc-finger fold.

In terms of biological role, may be involved in environmental stress response. This chain is Zinc finger A20 and AN1 domain-containing stress-associated protein 5 (SAP5), found in Arabidopsis thaliana (Mouse-ear cress).